The following is a 175-amino-acid chain: uncharacterized protein (175 aa).

Positions 1–173 (MYKNIIKLIS…VYKEKYKKLL (173 aa)) constitute a Macro domain.

This sequence belongs to the MacroD-type family.

This is an uncharacterized protein from Fusobacterium nucleatum subsp. nucleatum (strain ATCC 25586 / DSM 15643 / BCRC 10681 / CIP 101130 / JCM 8532 / KCTC 2640 / LMG 13131 / VPI 4355).